Consider the following 201-residue polypeptide: dCTP deaminase, dUMP-forming (201 aa).

DCTP-binding positions include 101-106 (KSSLGR), Asp-119, 127-129 (TLE), Gln-148, Tyr-162, and Gln-174. Glu-129 acts as the Proton donor/acceptor in catalysis. Polar residues predominate over residues 166 to 183 (EYSSRYQGQRGPTASRSF). Residues 166 to 201 (EYSSRYQGQRGPTASRSFLNFHRTDVSGTEAGRSSS) are disordered.

It belongs to the dCTP deaminase family. As to quaternary structure, homotrimer.

It carries out the reaction dCTP + 2 H2O = dUMP + NH4(+) + diphosphate. Its pathway is pyrimidine metabolism; dUMP biosynthesis; dUMP from dCTP: step 1/1. Its function is as follows. Bifunctional enzyme that catalyzes both the deamination of dCTP to dUTP and the hydrolysis of dUTP to dUMP without releasing the toxic dUTP intermediate. The protein is dCTP deaminase, dUMP-forming of Leifsonia xyli subsp. xyli (strain CTCB07).